The sequence spans 205 residues: Guanylate kinase (205 aa).

The Guanylate kinase-like domain maps to 18–196 (PKLFIISAPA…AYQVLRSIFI (179 aa)). An ATP-binding site is contributed by 25 to 32 (APAGAGKT).

Belongs to the guanylate kinase family.

The protein resides in the cytoplasm. It carries out the reaction GMP + ATP = GDP + ADP. Its function is as follows. Essential for recycling GMP and indirectly, cGMP. The polypeptide is Guanylate kinase (gmk) (Chlamydia trachomatis serovar D (strain ATCC VR-885 / DSM 19411 / UW-3/Cx)).